The sequence spans 375 residues: E3 ubiquitin-protein ligase FANCL (375 aa).

The UBC-RWD region (URD) stretch occupies residues 104 to 294 (QPPSCSFCKD…KDVLEIDFPA (191 aa)). The segment at 307–363 (CGICYARHLNGAIPDQVCNNPQCGQPFHEICLYEWLRGLSTSRQSFNVFFGDCPYCS) adopts an RING-type; degenerate zinc-finger fold.

Belongs to the multisubunit FA complex composed of FANCA, FANCB, FANCC, FANCE, FANCF, FANCG, FANCL/PHF9 and FANCM. In complex with FANCF, FANCA and FANCG, but not with FANCC, nor FANCE, interacts with HES1; this interaction may be essential for the stability and nuclear localization of FA core complex proteins. Interacts with FANCI. Interacts with GGN. Interacts (via the RING-type zinc finger) with UBE2T and UBE2W. In terms of processing, the RING-type zinc finger domain is monoubiquitinated in the presence of UBE2T and UBE2W.

Its subcellular location is the cytoplasm. It localises to the nucleus. The catalysed reaction is S-ubiquitinyl-[E2 ubiquitin-conjugating enzyme]-L-cysteine + [acceptor protein]-L-lysine = [E2 ubiquitin-conjugating enzyme]-L-cysteine + N(6)-ubiquitinyl-[acceptor protein]-L-lysine.. It participates in protein modification; protein ubiquitination. In terms of biological role, ubiquitin ligase protein that mediates monoubiquitination of FANCD2, a key step in the DNA damage pathway. Also mediates monoubiquitination of FANCI. May stimulate the ubiquitin release from UBE2W. May be required for proper primordial germ cell proliferation in the embryonic stage, whereas it is probably not needed for spermatogonial proliferation after birth. This chain is E3 ubiquitin-protein ligase FANCL (Fancl), found in Mus musculus (Mouse).